The primary structure comprises 223 residues: Protein NrfC (223 aa).

Residues 1 to 27 constitute a signal peptide (tat-type signal); that stretch reads MTWSRRQFLTGVGVLAAVSGTAGRVVA. 3 4Fe-4S ferredoxin-type domains span residues 37–65, 83–114, and 116–145; these read YGMVHDESLCIGCTACMDACREVNKVPEG, VKYRFFRKSCQHCDHAPCVDVCPTGASFRDAA, and GIVDVNPDLCVGCQYCIAACPYRVRFIHPV. [4Fe-4S] cluster contacts are provided by C46, C49, C52, C56, C92, C95, C100, C104, C125, C128, C131, C135, C152, C155, C168, and C172.

Post-translationally, predicted to be exported by the Tat system. The position of the signal peptide cleavage has not been experimentally proven.

In terms of biological role, probably involved in the transfer of electrons from the quinone pool to the type-c cytochromes. The protein is Protein NrfC (nrfC) of Escherichia coli O157:H7.